The sequence spans 497 residues: Carboxylesterase (497 aa).

The Acyl-ester intermediate role is filled by serine 185. Residues glutamate 319 and histidine 415 each act as charge relay system in the active site.

Belongs to the type-B carboxylesterase/lipase family.

It is found in the secreted. The enzyme catalyses a carboxylic ester + H2O = an alcohol + a carboxylate + H(+). In Thermobifida fusca (strain YX), this protein is Carboxylesterase.